The chain runs to 352 residues: Glycerol-1-phosphate dehydrogenase [NAD(P)+] (352 aa).

Residues 99 to 103 (GAKID) and 121 to 124 (TAPS) contribute to the NAD(+) site. A substrate-binding site is contributed by Asp126. An NAD(+)-binding site is contributed by Ser130. Position 173 (Asp173) interacts with substrate. The Zn(2+) site is built by Asp173 and His253. His257 is a binding site for substrate. Residue His269 coordinates Zn(2+).

It belongs to the glycerol-1-phosphate dehydrogenase family. Zn(2+) serves as cofactor.

The protein localises to the cytoplasm. The enzyme catalyses sn-glycerol 1-phosphate + NAD(+) = dihydroxyacetone phosphate + NADH + H(+). It carries out the reaction sn-glycerol 1-phosphate + NADP(+) = dihydroxyacetone phosphate + NADPH + H(+). Its pathway is membrane lipid metabolism; glycerophospholipid metabolism. Its function is as follows. Catalyzes the NAD(P)H-dependent reduction of dihydroxyacetonephosphate (DHAP or glycerone phosphate) to glycerol 1-phosphate (G1P). The G1P thus generated is used as the glycerophosphate backbone of phospholipids in the cellular membranes of Archaea. In Thermoplasma acidophilum (strain ATCC 25905 / DSM 1728 / JCM 9062 / NBRC 15155 / AMRC-C165), this protein is Glycerol-1-phosphate dehydrogenase [NAD(P)+].